A 151-amino-acid polypeptide reads, in one-letter code: Large ribosomal subunit protein bL9 (151 aa).

This sequence belongs to the bacterial ribosomal protein bL9 family.

Functionally, binds to the 23S rRNA. The protein is Large ribosomal subunit protein bL9 of Dehalococcoides mccartyi (strain ATCC BAA-2100 / JCM 16839 / KCTC 5957 / BAV1).